Consider the following 462-residue polypeptide: Argininosuccinate lyase (462 aa).

Belongs to the lyase 1 family. Argininosuccinate lyase subfamily.

It is found in the cytoplasm. It catalyses the reaction 2-(N(omega)-L-arginino)succinate = fumarate + L-arginine. It functions in the pathway amino-acid biosynthesis; L-arginine biosynthesis; L-arginine from L-ornithine and carbamoyl phosphate: step 3/3. In Ehrlichia ruminantium (strain Welgevonden), this protein is Argininosuccinate lyase.